A 260-amino-acid polypeptide reads, in one-letter code: Flavin-dependent thymidylate synthase (260 aa).

Residues 2-203 (ISVKLVSYTN…PRLFKYTGPN (202 aa)) enclose the ThyX domain. Residues Ser-56, 80 to 82 (RHR), and Gln-88 contribute to the FAD site. DUMP is bound by residues 77 to 80 (QLVR), 88 to 92 (QMSHR), and Arg-142. Residues 80 to 90 (RHRIASYTQMS) carry the ThyX motif motif. FAD is bound by residues 158–160 (NAR) and Asn-164. Arg-169 is a dUMP binding site. Arg-169 functions as the Involved in ionization of N3 of dUMP, leading to its activation in the catalytic mechanism.

Belongs to the thymidylate synthase ThyX family. As to quaternary structure, homotetramer. FAD is required as a cofactor.

The catalysed reaction is dUMP + (6R)-5,10-methylene-5,6,7,8-tetrahydrofolate + NADPH + H(+) = dTMP + (6S)-5,6,7,8-tetrahydrofolate + NADP(+). The protein operates within pyrimidine metabolism; dTTP biosynthesis. Catalyzes the reductive methylation of 2'-deoxyuridine-5'-monophosphate (dUMP) to 2'-deoxythymidine-5'-monophosphate (dTMP) while utilizing 5,10-methylenetetrahydrofolate (mTHF) as the methyl donor, and NADPH and FADH(2) as the reductant. In Saccharolobus solfataricus (strain ATCC 35092 / DSM 1617 / JCM 11322 / P2) (Sulfolobus solfataricus), this protein is Flavin-dependent thymidylate synthase.